Reading from the N-terminus, the 409-residue chain is Peptidase T (409 aa).

Histidine 78 contacts Zn(2+). Aspartate 80 is a catalytic residue. A Zn(2+)-binding site is contributed by aspartate 140. Catalysis depends on glutamate 173, which acts as the Proton acceptor. Residues glutamate 174, aspartate 196, and histidine 379 each contribute to the Zn(2+) site.

This sequence belongs to the peptidase M20B family. Zn(2+) serves as cofactor.

It localises to the cytoplasm. The enzyme catalyses Release of the N-terminal residue from a tripeptide.. In terms of biological role, cleaves the N-terminal amino acid of tripeptides. This Salmonella choleraesuis (strain SC-B67) protein is Peptidase T.